Reading from the N-terminus, the 486-residue chain is Corytuberine synthase (486 aa).

Residues 6–21 (ALFSLIPVILVFILLL) traverse the membrane as a helical segment. C428 serves as a coordination point for heme.

It belongs to the cytochrome P450 family. Requires heme as cofactor.

It is found in the endoplasmic reticulum membrane. The catalysed reaction is (S)-reticuline + reduced [NADPH--hemoprotein reductase] + O2 = (S)-corytuberine + oxidized [NADPH--hemoprotein reductase] + 2 H2O + 2 H(+). Its activity is regulated as follows. Inhibited by ketoconazole. In terms of biological role, cytochrome P450 that catalyzes an intramolecular C-C phenol coupling of (S)-reticuline in magnoflorine biosynthesis. Catalyzes the formation of (S)-corytuberine from (S)-reticuline, and also, with a lover efficiency, the 4'-O-demethylation of codamine to produce orientaline, and subsequent C-C-phenol coupling of orientaline. Can also use (R,S)-norreticuline, (R,S)-orientaline, (S)-N-methylcoclaurine and (S)-coclaurine as substrates, but not (R,S)-6-O-methyllaudanosoline, (R,S)-6-O-methylnorlaudanosoline, (R,S)-laudanine, (R,S)-norlaudanine, (R,S)-4'-O-methyllaudanosoline, (R,S)-pseudocodamine, (R,S)-norpseudocodamine, (R,S)-laudanosine, (R,S)-norlaudanosine, (R,S)-laudanosoline or (R,S)-norlaudanosoline. The sequence is that of Corytuberine synthase from Coptis japonica (Japanese goldthread).